The sequence spans 712 residues: Asp/Glu-specific dipeptidyl-peptidase (712 aa).

A signal peptide spans 1-18 (MKRFFKMALFLGVSALYG). Catalysis depends on charge relay system residues His-84, Asp-220, and Ser-647.

Belongs to the peptidase S46 family.

Its function is as follows. Catalyzes the removal of dipeptides from the N-terminus of oligopeptides. Shows a strict specificity for acidic residues (Asp or Glu) in the P1 position, and has probably a hydrophobic residue preference at the P2 position. Preferentially cleaves the synthetic substrate Leu-Asp-methylcoumaryl-7-amide (Leu-Asp-MCA) as compared to Leu-Glu-MCA. This is Asp/Glu-specific dipeptidyl-peptidase (dpp11) from Capnocytophaga gingivalis.